The primary structure comprises 731 residues: 1,4-alpha-glucan branching enzyme GlgB (731 aa).

Cysteine 193 and cysteine 617 are disulfide-bonded. The active-site Nucleophile is aspartate 411. The active-site Proton donor is glutamate 464.

Belongs to the glycosyl hydrolase 13 family. GlgB subfamily. As to quaternary structure, monomer.

It catalyses the reaction Transfers a segment of a (1-&gt;4)-alpha-D-glucan chain to a primary hydroxy group in a similar glucan chain.. It participates in glycan biosynthesis; glycogen biosynthesis. The protein operates within capsule biogenesis; capsule polysaccharide biosynthesis. Its function is as follows. Essential enzyme that catalyzes the formation of the alpha-1,6-glucosidic linkages in glucan chains by scission of a 1,4-alpha-linked oligosaccharide from growing alpha-1,4-glucan chains and the subsequent attachment of the oligosaccharide to the alpha-1,6 position. Is involved in the biosynthesis of both glycogen and capsular alpha-D-glucan. This is 1,4-alpha-glucan branching enzyme GlgB (glgB) from Mycobacterium tuberculosis (strain CDC 1551 / Oshkosh).